Here is a 281-residue protein sequence, read N- to C-terminus: MAFSDLTSRTVRFYDNWIKDADPRVEDYLLMSSPLPQTIILGLYVYFVTSLGPKLMENRKPFELKKAMITYNFFIVLFSVYMCYEFVMSGWGTGYSFRCDIVDYSQSPRAMRMVHTCWLYYFSKFIELLDTIFFVLRKKNSQVTFLHVFHHTIMPWTWWFGVKFAAGGLGTFHAFLNTAVHVVMYSYYGLCAMGPAYQKYLWWKKHLTSLQLVQFVLVTIHIGQIFFMEDCNYQYPVFLYIIMSYGCIFLLLFLHFWYRAYTKGQRLPKTLENGNCKSKRH.

At Ala2 the chain carries N-acetylalanine. Over 2 to 27 the chain is Lumenal; that stretch reads AFSDLTSRTVRFYDNWIKDADPRVED. A helical transmembrane segment spans residues 28–48; sequence YLLMSSPLPQTIILGLYVYFV. The Cytoplasmic portion of the chain corresponds to 49 to 72; sequence TSLGPKLMENRKPFELKKAMITYN. Residues 73 to 93 form a helical membrane-spanning segment; it reads FFIVLFSVYMCYEFVMSGWGT. The Lumenal segment spans residues 94–115; the sequence is GYSFRCDIVDYSQSPRAMRMVH. Residues Cys99 and Cys231 are joined by a disulfide bond. Residues 116-136 form a helical membrane-spanning segment; the sequence is TCWLYYFSKFIELLDTIFFVL. 3-oxoeicosanoyl-CoA-binding residues include Lys124, Arg137, Lys139, Gln142, and His147. Over 137–142 the chain is Cytoplasmic; it reads RKKNSQ. The chain crosses the membrane as a helical span at residues 143–162; that stretch reads VTFLHVFHHTIMPWTWWFGV. A HxxHH motif motif is present at residues 147–151; that stretch reads HVFHH. His150 (nucleophile) is an active-site residue. Topologically, residues 163-171 are lumenal; it reads KFAAGGLGT. A helical transmembrane segment spans residues 172 to 194; that stretch reads FHAFLNTAVHVVMYSYYGLCAMG. The 3-oxoeicosanoyl-CoA site is built by Tyr187, Lys204, Thr208, and Gln211. At 195–206 the chain is on the cytoplasmic side; sequence PAYQKYLWWKKH. A helical membrane pass occupies residues 207 to 227; the sequence is LTSLQLVQFVLVTIHIGQIFF. The Lumenal portion of the chain corresponds to 228 to 236; it reads MEDCNYQYP. A helical membrane pass occupies residues 237-257; that stretch reads VFLYIIMSYGCIFLLLFLHFW. The Cytoplasmic segment spans residues 258–281; sequence YRAYTKGQRLPKTLENGNCKSKRH. Arg266 serves as a coordination point for 3-oxoeicosanoyl-CoA. The Di-lysine motif signature appears at 277-281; the sequence is KSKRH.

It belongs to the ELO family. ELOVL7 subfamily. Homodimer. Interacts with TECR.

Its subcellular location is the endoplasmic reticulum membrane. It carries out the reaction a very-long-chain acyl-CoA + malonyl-CoA + H(+) = a very-long-chain 3-oxoacyl-CoA + CO2 + CoA. It catalyses the reaction eicosanoyl-CoA + malonyl-CoA + H(+) = 3-oxodocosanoyl-CoA + CO2 + CoA. The catalysed reaction is (5Z,8Z,11Z,14Z)-eicosatetraenoyl-CoA + malonyl-CoA + H(+) = (7Z,10Z,13Z,16Z)-3-oxodocosatetraenoyl-CoA + CO2 + CoA. The enzyme catalyses (6Z,9Z,12Z)-octadecatrienoyl-CoA + malonyl-CoA + H(+) = (8Z,11Z,14Z)-3-oxoeicosatrienoyl-CoA + CO2 + CoA. It carries out the reaction (9Z,12Z)-octadecadienoyl-CoA + malonyl-CoA + H(+) = (11Z,14Z)-3-oxoicosa-11,14-dienoyl-CoA + CO2 + CoA. It catalyses the reaction (9Z)-octadecenoyl-CoA + malonyl-CoA + H(+) = 3-oxo-(11Z)-eicosenoyl-CoA + CO2 + CoA. The catalysed reaction is octadecanoyl-CoA + malonyl-CoA + H(+) = 3-oxoeicosanoyl-CoA + CO2 + CoA. The enzyme catalyses hexadecanoyl-CoA + malonyl-CoA + H(+) = 3-oxooctadecanoyl-CoA + CO2 + CoA. It carries out the reaction (9Z,12Z,15Z)-octadecatrienoyl-CoA + malonyl-CoA + H(+) = (11Z,14Z,17Z)-3-oxoeicosatrienoyl-CoA + CO2 + CoA. It participates in lipid metabolism; fatty acid biosynthesis. In terms of biological role, catalyzes the first and rate-limiting reaction of the four reactions that constitute the long-chain fatty acids elongation cycle. This endoplasmic reticulum-bound enzymatic process allows the addition of 2 carbons to the chain of long- and very long-chain fatty acids (VLCFAs) per cycle. Condensing enzyme with higher activity toward C18 acyl-CoAs, especially C18:3(n-3) acyl-CoAs and C18:3(n-6)-CoAs. Also active toward C20:4-, C18:0-, C18:1-, C18:2- and C16:0-CoAs, and weakly toward C20:0-CoA. Little or no activity toward C22:0-, C24:0-, or C26:0-CoAs. May participate in the production of saturated and polyunsaturated VLCFAs of different chain lengths that are involved in multiple biological processes as precursors of membrane lipids and lipid mediators. In Mus musculus (Mouse), this protein is Very long chain fatty acid elongase 7.